We begin with the raw amino-acid sequence, 186 residues long: dCTP deaminase (186 aa).

107–112 (KSSYAR) is a binding site for dCTP. E133 acts as the Proton donor/acceptor in catalysis. Residues Q152, Y166, and Q176 each contribute to the dCTP site.

It belongs to the dCTP deaminase family. Homotrimer.

It carries out the reaction dCTP + H2O + H(+) = dUTP + NH4(+). It participates in pyrimidine metabolism; dUMP biosynthesis; dUMP from dCTP (dUTP route): step 1/2. In terms of biological role, catalyzes the deamination of dCTP to dUTP. In Chloroflexus aurantiacus (strain ATCC 29366 / DSM 635 / J-10-fl), this protein is dCTP deaminase.